Here is a 511-residue protein sequence, read N- to C-terminus: Gap junction alpha-3 protein (511 aa).

The stretch at 2 to 15 (GDWSFLGRLLENAQ) is an intramembrane region. Residues 16 to 19 (EHST) are Cytoplasmic-facing. A helical transmembrane segment spans residues 20–40 (VIGKVWLTVLFIFRILVLGAA). The Extracellular portion of the chain corresponds to 41-71 (AEEVWGDEQSDFTCNTQQPGCENVCYDKAFP). 3 disulfide bridges follow: cysteine 54-cysteine 214, cysteine 61-cysteine 208, and cysteine 65-cysteine 203. The chain crosses the membrane as a helical span at residues 72–92 (ISHIRFWVLQIIFVSTPTLIY). The Cytoplasmic segment spans residues 93-174 (LGHVLHIVRM…GALLRTYIFN (82 aa)). The segment covering 110-119 (EEELKKRGSV) has biased composition (basic and acidic residues). Positions 110 to 143 (EEELKKRGSVKDNNYPGAATSGGGSGGGNNFKDP) are disordered. Residues 129–138 (TSGGGSGGGN) are compositionally biased toward gly residues. A helical membrane pass occupies residues 175–195 (IIFKTLFEVGFIVGQYFLYGF). At 196–223 (ELKPVYQCSRPPCPHTVDCFISRPTEKT) the chain is on the extracellular side. Residues 224-244 (IFIIFMLVVASVSLLLNMLEI) form a helical membrane-spanning segment. The Cytoplasmic segment spans residues 245–511 (YHLGWKKLKQ…SRARSDDLAV (267 aa)). The disordered stretch occupies residues 397–511 (AEQQGKAPSS…SRARSDDLAV (115 aa)). Low complexity-rich tracts occupy residues 403–415 (APSS…TPSS) and 440–456 (TTTN…ASGS).

The protein belongs to the connexin family. In terms of assembly, a hemichannel or connexon is composed of a hexamer of connexins. A functional gap junction is formed by the apposition of two hemichannels. During early stages of lens development, interacts with the C-terminus of MIP. As to expression, detected in eye lens.

The protein localises to the cell membrane. The protein resides in the cell junction. Its subcellular location is the gap junction. In terms of biological role, structural component of lens fiber gap junctions. Gap junctions are dodecameric channels that connect the cytoplasm of adjoining cells. They are formed by the docking of two hexameric hemichannels, one from each cell membrane. Small molecules and ions diffuse from one cell to a neighboring cell via the central pore. This is Gap junction alpha-3 protein (GJA3) from Gallus gallus (Chicken).